The following is a 140-amino-acid chain: MAKKVEKIVKLQIPAGKATPAPPVGPALGQAGINIMGFTKEFNARTADQAGLIIPVVISVYEDRSFTFITKTPPAAVLLKKAAKIEKGSGEPNKTKVATVSSDQVKEIAELKMADLNAADVEAAMRMVAGTARSMGIIVE.

It belongs to the universal ribosomal protein uL11 family. Part of the ribosomal stalk of the 50S ribosomal subunit. Interacts with L10 and the large rRNA to form the base of the stalk. L10 forms an elongated spine to which L12 dimers bind in a sequential fashion forming a multimeric L10(L12)X complex. Post-translationally, one or more lysine residues are methylated.

Forms part of the ribosomal stalk which helps the ribosome interact with GTP-bound translation factors. The sequence is that of Large ribosomal subunit protein uL11 from Enterococcus faecalis (strain ATCC 700802 / V583).